A 252-amino-acid polypeptide reads, in one-letter code: Protein Flattop homolog (252 aa).

Residues 177–252 are disordered; it reads TEKRRRKRTI…EKERKAAKGH (76 aa). Basic and acidic residues predominate over residues 218-252; that stretch reads PKDKPKDKPKDKEAGKKDKTKDKGKEKERKAAKGH.

The protein belongs to the Flattop family.

In Drosophila melanogaster (Fruit fly), this protein is Protein Flattop homolog.